We begin with the raw amino-acid sequence, 98 residues long: Integration host factor subunit alpha (98 aa).

A disordered region spans residues 49–71; it reads FGNFDLRDKNQRPGRNPKTGEDI.

The protein belongs to the bacterial histone-like protein family. As to quaternary structure, heterodimer of an alpha and a beta chain.

Its function is as follows. This protein is one of the two subunits of integration host factor, a specific DNA-binding protein that functions in genetic recombination as well as in transcriptional and translational control. This is Integration host factor subunit alpha from Edwardsiella ictaluri (strain 93-146).